The chain runs to 220 residues: MSETTETQNTAGLKLNGLFAFKEGMATIYNENGEAVPVTVLRYEPWFVSQIKTNEADGYEAIQVACHPKKAKNSNKAEKGHLEKAGFENGAQFVKELRQAAPEGTVVGAQISIDSLAKGDFVKITSKSKGKGFAGSVKRWGFAGGPASHGSKFHRRPGSSGNRTWPGRVMPGKKFPGHLGAETVTVKNVEVVQIIAEENVLMVKGPVPGARNTLVKLVRE.

The interval 145–169 (GPASHGSKFHRRPGSSGNRTWPGRV) is disordered.

This sequence belongs to the universal ribosomal protein uL3 family. As to quaternary structure, part of the 50S ribosomal subunit. Forms a cluster with proteins L14 and L19.

Its function is as follows. One of the primary rRNA binding proteins, it binds directly near the 3'-end of the 23S rRNA, where it nucleates assembly of the 50S subunit. In Bdellovibrio bacteriovorus (strain ATCC 15356 / DSM 50701 / NCIMB 9529 / HD100), this protein is Large ribosomal subunit protein uL3.